The following is a 213-amino-acid chain: Motile sperm domain-containing protein 1 (213 aa).

One can recognise an MSP domain in the interval 16–143 (PVFVFPTELI…KEHLTESVFF (128 aa)). Helical transmembrane passes span 159-179 (SLLT…PTLG) and 191-211 (LSVN…MAIL). The Nuclear export signal signature appears at 205–208 (LITM).

As to expression, widely expressed. Shows highest expression in ribs, and slightly lower levels of expression in heart, kidney, muscle, thymus, calvariae and lung. Also detected at low levels in spleen and liver.

Its subcellular location is the endoplasmic reticulum membrane. The protein localises to the golgi apparatus membrane. In terms of biological role, plays a role in differentiation and/or proliferation of mesenchymal stem cells. Proposed to be involved in epithelial-to-mesenchymal transition (EMT). However, another study suggests that it is not required for EMT or stem cell self-renewal and acts during later stages of differentiation. The sequence is that of Motile sperm domain-containing protein 1 (Mospd1) from Mus musculus (Mouse).